We begin with the raw amino-acid sequence, 201 residues long: Small ribosomal subunit protein uS4c (201 aa).

The S4 RNA-binding domain maps to 89–150 (MRLDNILFRL…KQRSKVLIQN (62 aa)).

It belongs to the universal ribosomal protein uS4 family. Part of the 30S ribosomal subunit. Contacts protein S5. The interaction surface between S4 and S5 is involved in control of translational fidelity.

It is found in the plastid. The protein resides in the chloroplast. Its function is as follows. One of the primary rRNA binding proteins, it binds directly to 16S rRNA where it nucleates assembly of the body of the 30S subunit. With S5 and S12 plays an important role in translational accuracy. The sequence is that of Small ribosomal subunit protein uS4c (rps4) from Dioscorea elephantipes (Elephant's foot yam).